The primary structure comprises 319 residues: Peroxidase 62 (319 aa).

The N-terminal stretch at 1–22 (MGLVRSFALVIVFLSCLIAVYG) is a signal peptide. Cystine bridges form between C34–C110, C67–C72, C116–C315, and C195–C226. H65 serves as the catalytic Proton acceptor. Residues D66, V69, G71, D73, and S75 each coordinate Ca(2+). P157 is a substrate binding site. Heme b is bound at residue H188. Position 189 (T189) interacts with Ca(2+). N204 is a glycosylation site (N-linked (GlcNAc...) asparagine). Ca(2+) is bound by residues D239, S242, and D247. A glycan (N-linked (GlcNAc...) asparagine) is linked at N253.

This sequence belongs to the peroxidase family. Classical plant (class III) peroxidase subfamily. Heme b is required as a cofactor. Ca(2+) serves as cofactor. As to expression, mainly expressed in roots.

The protein localises to the secreted. The catalysed reaction is 2 a phenolic donor + H2O2 = 2 a phenolic radical donor + 2 H2O. In terms of biological role, removal of H(2)O(2), oxidation of toxic reductants, biosynthesis and degradation of lignin, suberization, auxin catabolism, response to environmental stresses such as wounding, pathogen attack and oxidative stress. These functions might be dependent on each isozyme/isoform in each plant tissue. This is Peroxidase 62 (PER62) from Arabidopsis thaliana (Mouse-ear cress).